Consider the following 318-residue polypeptide: Aspartate carbamoyltransferase catalytic subunit (318 aa).

Carbamoyl phosphate is bound by residues R59 and T60. K87 is an L-aspartate binding site. Carbamoyl phosphate contacts are provided by R109, H137, and Q140. The L-aspartate site is built by R170 and R224. Carbamoyl phosphate-binding residues include G265 and P266.

Belongs to the aspartate/ornithine carbamoyltransferase superfamily. ATCase family. In terms of assembly, heterododecamer (2C3:3R2) of six catalytic PyrB chains organized as two trimers (C3), and six regulatory PyrI chains organized as three dimers (R2).

The enzyme catalyses carbamoyl phosphate + L-aspartate = N-carbamoyl-L-aspartate + phosphate + H(+). Its pathway is pyrimidine metabolism; UMP biosynthesis via de novo pathway; (S)-dihydroorotate from bicarbonate: step 2/3. Catalyzes the condensation of carbamoyl phosphate and aspartate to form carbamoyl aspartate and inorganic phosphate, the committed step in the de novo pyrimidine nucleotide biosynthesis pathway. This is Aspartate carbamoyltransferase catalytic subunit from Rhizobium johnstonii (strain DSM 114642 / LMG 32736 / 3841) (Rhizobium leguminosarum bv. viciae).